The following is a 228-amino-acid chain: Phosphoenolpyruvate guanylyltransferase (228 aa).

Phosphoenolpyruvate-binding residues include Thr148, Gly164, and Ser167.

This sequence belongs to the CofC family.

The enzyme catalyses phosphoenolpyruvate + GTP + H(+) = enolpyruvoyl-2-diphospho-5'-guanosine + diphosphate. The protein operates within cofactor biosynthesis; coenzyme F420 biosynthesis. Functionally, guanylyltransferase that catalyzes the activation of phosphoenolpyruvate (PEP) as enolpyruvoyl-2-diphospho-5'-guanosine, via the condensation of PEP with GTP. It is involved in the biosynthesis of coenzyme F420, a hydride carrier cofactor. The polypeptide is Phosphoenolpyruvate guanylyltransferase (Thermomonospora curvata (strain ATCC 19995 / DSM 43183 / JCM 3096 / KCTC 9072 / NBRC 15933 / NCIMB 10081 / Henssen B9)).